A 508-amino-acid chain; its full sequence is Photosystem II CP47 reaction center protein (508 aa).

6 consecutive transmembrane segments (helical) span residues 21 to 36 (SVHI…WAGS), 101 to 115 (IVFS…IWHW), 140 to 156 (GIHL…FGAF), 203 to 218 (IAAG…FHLS), 237 to 252 (VLSS…AFVV), and 457 to 472 (SFAL…HGAR).

It belongs to the PsbB/PsbC family. PsbB subfamily. As to quaternary structure, PSII is composed of 1 copy each of membrane proteins PsbA, PsbB, PsbC, PsbD, PsbE, PsbF, PsbH, PsbI, PsbJ, PsbK, PsbL, PsbM, PsbT, PsbX, PsbY, PsbZ, Psb30/Ycf12, at least 3 peripheral proteins of the oxygen-evolving complex and a large number of cofactors. It forms dimeric complexes. Binds multiple chlorophylls. PSII binds additional chlorophylls, carotenoids and specific lipids. serves as cofactor.

It localises to the plastid. Its subcellular location is the chloroplast thylakoid membrane. Its function is as follows. One of the components of the core complex of photosystem II (PSII). It binds chlorophyll and helps catalyze the primary light-induced photochemical processes of PSII. PSII is a light-driven water:plastoquinone oxidoreductase, using light energy to abstract electrons from H(2)O, generating O(2) and a proton gradient subsequently used for ATP formation. The polypeptide is Photosystem II CP47 reaction center protein (Vitis vinifera (Grape)).